The sequence spans 210 residues: Ribosomal RNA large subunit methyltransferase E (210 aa).

Residues G60, W62, D80, D96, and D122 each coordinate S-adenosyl-L-methionine. K162 (proton acceptor) is an active-site residue.

The protein belongs to the class I-like SAM-binding methyltransferase superfamily. RNA methyltransferase RlmE family.

Its subcellular location is the cytoplasm. The enzyme catalyses uridine(2552) in 23S rRNA + S-adenosyl-L-methionine = 2'-O-methyluridine(2552) in 23S rRNA + S-adenosyl-L-homocysteine + H(+). Specifically methylates the uridine in position 2552 of 23S rRNA at the 2'-O position of the ribose in the fully assembled 50S ribosomal subunit. This Dichelobacter nodosus (strain VCS1703A) protein is Ribosomal RNA large subunit methyltransferase E.